A 177-amino-acid chain; its full sequence is 2''-aminoglycoside nucleotidyltransferase (177 aa).

Positions 44, 46, and 86 each coordinate Mg(2+). Catalysis depends on Asp86, which acts as the Proton acceptor.

Mg(2+) serves as cofactor.

The catalysed reaction is nucleoside triphosphate + gentamicin = diphosphate + 2''-nucleotidylgentamicin.. Its function is as follows. Mediates bacterial resistance to kanamycin, gentamicin, dibekacin, sisomicin, neomycin and tobramycin by adenylating the 2''-hydroxyl group of these antibiotics. The sequence is that of 2''-aminoglycoside nucleotidyltransferase (aadB) from Klebsiella pneumoniae.